We begin with the raw amino-acid sequence, 339 residues long: GTPase Obg (339 aa).

The Obg domain occupies 1–159 (MKFVDEAFVR…RELKLELKLL (159 aa)). A disordered region spans residues 127-147 (NTHFKSSTNRAPRRTTSGEEG). Positions 160-333 (ADVGLLGLPN…LCYDLMSFLE (174 aa)) constitute an OBG-type G domain. GTP is bound by residues 166–173 (GLPNAGKS), 191–195 (FTTLY), 213–216 (DIPG), 283–286 (NKID), and 314–316 (SAI). Residues Ser173 and Thr193 each coordinate Mg(2+).

The protein belongs to the TRAFAC class OBG-HflX-like GTPase superfamily. OBG GTPase family. As to quaternary structure, monomer. Requires Mg(2+) as cofactor.

It is found in the cytoplasm. Its function is as follows. An essential GTPase which binds GTP, GDP and possibly (p)ppGpp with moderate affinity, with high nucleotide exchange rates and a fairly low GTP hydrolysis rate. Plays a role in control of the cell cycle, stress response, ribosome biogenesis and in those bacteria that undergo differentiation, in morphogenesis control. In Coxiella burnetii (strain CbuG_Q212) (Coxiella burnetii (strain Q212)), this protein is GTPase Obg.